The following is a 125-amino-acid chain: MRHRKSGSKLNRTSAHRKAMFKNMVVSLVMHKIIKTTLSKAKALRRIIEPLITRSKVDTIANRRLIFSKTRNNDVVTKLFTQISPYFYNRPGGYTRILKCGLRKGDNAPMAYIELVERSKIKQKI.

Belongs to the bacterial ribosomal protein bL17 family. As to quaternary structure, part of the 50S ribosomal subunit. Contacts protein L32.

This Blochmanniella pennsylvanica (strain BPEN) protein is Large ribosomal subunit protein bL17.